The primary structure comprises 148 residues: Large ribosomal subunit protein uL15 (148 aa).

Over residues 1 to 10 the composition is skewed to basic and acidic residues; it reads MQLHNLEYKK. Residues 1 to 42 are disordered; it reads MQLHNLEYKKGSRNHKEKRVGRGHGSGLGKTSGRGQDGQKAR. Residues 11-22 are compositionally biased toward basic residues; it reads GSRNHKEKRVGR. Positions 23–36 are enriched in gly residues; sequence GHGSGLGKTSGRGQ.

The protein belongs to the universal ribosomal protein uL15 family. In terms of assembly, part of the 50S ribosomal subunit.

Functionally, binds to the 23S rRNA. This is Large ribosomal subunit protein uL15 from Ureaplasma urealyticum serovar 10 (strain ATCC 33699 / Western).